The chain runs to 344 residues: Ribosomal RNA large subunit methyltransferase Cfr (344 aa).

Glu-90 acts as the Proton acceptor in catalysis. Residues 97 to 330 (KQGWESFCIS…ATVRTQFGSE (234 aa)) enclose the Radical SAM core domain. Residues Cys-104 and Cys-335 are joined by a disulfide bond. [4Fe-4S] cluster is bound by residues Cys-111, Cys-115, and Cys-118. S-adenosyl-L-methionine contacts are provided by residues 157-158 (GE), Ser-188, 211-213 (SLH), and Asn-292. Cys-335 (S-methylcysteine intermediate) is an active-site residue.

It belongs to the radical SAM superfamily. RlmN family. Cfr subfamily. Requires [4Fe-4S] cluster as cofactor.

It is found in the cytoplasm. It carries out the reaction adenosine(2503) in 23S rRNA + 2 reduced [2Fe-2S]-[ferredoxin] + 2 S-adenosyl-L-methionine = 8-methyladenosine(2503) in 23S rRNA + 5'-deoxyadenosine + L-methionine + 2 oxidized [2Fe-2S]-[ferredoxin] + S-adenosyl-L-homocysteine. Functionally, specifically methylates position 8 of adenine 2503 in 23S rRNA. Confers resistance to some classes of antibiotics. This chain is Ribosomal RNA large subunit methyltransferase Cfr, found in Clostridium botulinum (strain Langeland / NCTC 10281 / Type F).